The following is a 409-amino-acid chain: Immunity-related GTPase family M protein 1 (409 aa).

One can recognise an IRG-type G domain in the interval 75–251 (IPVSIFVTGD…PKLRDTLHKD (177 aa)). Residues 84–91 (DSGNGMSS), 109–113 (TGVVR), and 191–193 (KLD) each bind GTP. Residue S202 is modified to Phosphoserine. 232-234 (SSL) lines the GTP pocket. A Glycyl lysine isopeptide (Lys-Gly) (interchain with G-Cter in ubiquitin) cross-link involves residue K270. Residues 350–374 (KLRLMTCAIVNAFFRLLRFLPCVCC) are alpha-K amphipathic helix.

The protein belongs to the TRAFAC class dynamin-like GTPase superfamily. IRG family. In terms of assembly, interacts with ULK1; promoting the coassembly of ULK1 and BECN1. Interacts with BECN1; enhancing BECN1-interacting partners and influencing the composition of the BECN1 complex. Interacts with ATG16L1. Interacts with NOD2; promoting Irgm1 'Lys-63'-linked polyubiquitination, which is required for interactions with the core autophagy factors. Interacts with STX17; promoting STX17 recruitment to autophagosomes. Interacts with ATG8 proteins (GABARAP, GABARAPL1, GABARAPL2, MAP1LC3A, MAP1LC3B and MAP1LC3C); promoting STX17 recruitment to autophagosomes. Interacts with TFEB; promoting association between TFEB and PPP3CB and TFEB dephosphorylation. Interacts with PPP3CB; promoting association between TFEB and PPP3CB and TFEB dephosphorylation. Interacts with NLRP3; preventing NLRP3 inflammasome assembly and promoting SQSTM1/p62-dependent autophagic degradation of NLRP3. Interacts with CGAS; promoting SQSTM1/p62-dependent autophagic degradation of CGAS. Interacts with RIGI/RIG-I; promoting SQSTM1/p62-dependent autophagic degradation of RIGI/RIG-I. Interacts with NOD1; promoting SQSTM1/p62-dependent autophagic degradation of RIGI/RIG-I. Interacts with NOD2; promoting SQSTM1/p62-dependent autophagic degradation of RIGI/RIG-I. Interacts with RIPK2; promoting SQSTM1/p62-dependent autophagic degradation of RIGI/RIG-I. Interacts with PIK3CA. Palmitoylated on C-terminal Cys residues. Palmitoylation, together with the alpha-K amphipathic helix, which binds phosphatidylinositol, mediate binding to membranes. Post-translationally, ubiquitinated via 'Lys-63'-linked polyubiquitination in a NOD2-dependent process. 'Lys-63'-linked polyubiquitination is required for interactions with the core autophagy factors. Ubiquitination at Lys-270 by the DCX(WDR77) complex, also named CLR4(WDR77) complex, in intestinal cells, leading to its degradation by the proteasome. As to expression, expressed in lung and primary macrophages.

The protein resides in the golgi apparatus membrane. It localises to the cell membrane. It is found in the cytoplasmic vesicle. Its subcellular location is the phagosome membrane. The protein localises to the autophagosome membrane. The protein resides in the lysosome membrane. It localises to the late endosome membrane. It is found in the mitochondrion membrane. Its subcellular location is the lipid droplet. The protein localises to the cell projection. The protein resides in the phagocytic cup. It catalyses the reaction GTP + H2O = GDP + phosphate + H(+). Immunity-related GTPase that plays important roles in innate immunity and inflammatory response. Acts as a dynamin-like protein that binds to intracellular membranes and promotes remodeling and trafficking of those membranes. Required for clearance of acute protozoan and bacterial infections by interacting with autophagy and lysosome regulatory proteins, thereby promoting the fusion of phagosomes with lysosomes for efficient degradation of cargo including microbes. Regulates selective autophagy, including xenophagy and mitophagy, both directly and indirectly. Directly regulates autophagy by acting as a molecular adapter that promotes the coassembly of the core autophagy machinery to mediate antimicrobial defense: Irgm1 (1) activates AMPK, which in turn phosphorylates ULK1 and BECN1 to induce autophagy, (2) promotes the coassembly of ULK1 and BECN1, enhancing BECN1-interacting partners and (3) influences the composition of the BECN1 complex, by competing with the negative regulators BCL2 and RUBCN, to trigger autophagy. Also activates autophagy by promoting recruitment of STX17 to autophagosomes. In collaboration with ATG8 proteins, regulate lysosomal biogenesis, a fundamental process for any autophagic pathway, by promoting TFEB dephosphorylation. Also modulates autophagy by assisting with autophagosome formation and preventing lysosomal deacidification. Regulates autophagy by affecting mitochondrial fusion and fission. Also involved in M1 macrophage activation for the production of proinflammatory cytokines. While activating autophagy, acts as a key negative regulator of the inflammatory and interferon responses both by (1) promoting mitophagy and (2) mediating autophagy-dependent degradation of effectors of the inflammatory response. Promotes degradation of damaged and IFNG/IFN-gamma-stressed mitochondria via mitophagy, preventing cytosolic release of ligands that activate inflammation. Negatively regulates interferon-signaling in hematopoietic stem cells, preserving hematopoietic stem cell number and function. Promotes expansion of activated CD4(+) T-cells by inhibiting IFNG/IFN-gamma signaling, thereby preventing Ifng-mediated cell death of CD4(+) T-cells. Acts as a suppressor of inflammation by promoting recruitment of inflammation effectors, such as CGAS, RIGI/RIG-I and NLRP3, to autophagosome membranes, leading to their SQSTM1/p62-dependent autophagic degradation. Also directly inhibits assembly of the NLRP3 inflammasome by preventing the association between NLRP3 and PYCARD. Acts as a negative regulator of antiviral innate immune response by suppressing the RIPK2-dependent pro-inflammatory response: mediates recruitment of RIPosomes, composed of RIPK2 and NOD1 or NOD2, to autophagosome membranes, promoting their SQSTM1/p62-dependent autophagic degradation. The chain is Immunity-related GTPase family M protein 1 from Mus musculus (Mouse).